Consider the following 1071-residue polypeptide: ATP-dependent helicase/deoxyribonuclease subunit B (1071 aa).

It belongs to the helicase family. AddB/RexB type 2 subfamily. Heterodimer of AddA and RexB. It depends on Mg(2+) as a cofactor.

In terms of biological role, the heterodimer acts as both an ATP-dependent DNA helicase and an ATP-dependent, dual-direction single-stranded exonuclease. Recognizes the chi site generating a DNA molecule suitable for the initiation of homologous recombination. This subunit has 5' -&gt; 3' nuclease activity but not helicase activity. This is ATP-dependent helicase/deoxyribonuclease subunit B from Streptococcus pyogenes serotype M6 (strain ATCC BAA-946 / MGAS10394).